The following is a 590-amino-acid chain: Guanylate-binding protein 5 (590 aa).

An NLRP3-binding region spans residues methionine 1–glycine 306. Residues methionine 1–serine 310 form a GTPase domain (Globular) region. Residues threonine 35–lysine 277 enclose the GB1/RHD3-type G domain. Residues glycine 45–serine 52, valine 67–serine 69, arginine 182–aspartate 183, and leucine 246 each bind GTP. The segment at glutamine 529–serine 590 is required for tetramerization, but not for dimerization. Residue cysteine 587 is modified to Cysteine methyl ester. A lipid anchor (S-geranylgeranyl cysteine) is attached at cysteine 587. The propeptide at valine 588–serine 590 is removed in mature form.

Belongs to the TRAFAC class dynamin-like GTPase superfamily. GB1/RHD3 GTPase family. GB1 subfamily. Homodimer; homodimerizes upon GTP-binding, forming a close face-to-face dimer. Heterodimer with other family members, including GBP1, GBP2, GBP3 and GBP4. May also form tetramers (dimer of dimers) in the presence of GTP. Interacts with NLRP3, possibly in its tetrameric form, and promotes PYCARD/ASC polymerization. In terms of processing, isoprenylation is required for proper subcellular location. As to expression, low expression, if any, in many tissues in the absence of stimulation.

It is found in the cytoplasmic vesicle membrane. It localises to the golgi apparatus membrane. Its subcellular location is the cytoplasm. The catalysed reaction is GTP + H2O = GDP + phosphate + H(+). Its function is as follows. Interferon (IFN)-inducible GTPase that plays important roles in innate immunity against a diverse range of bacterial, viral and protozoan pathogens. Hydrolyzes GTP, but in contrast to other family members, does not produce GMP. Following infection, recruited to the pathogen-containing vacuoles or vacuole-escaped bacteria and acts as a positive regulator of inflammasome assembly by promoting the release of inflammasome ligands from bacteria. Acts by promoting lysis of pathogen-containing vacuoles, releasing pathogens into the cytosol. Following pathogen release in the cytosol, promotes recruitment of proteins that mediate bacterial cytolysis, such as Gm12250/Irgb10: this liberates ligands that are detected by inflammasomes, such as lipopolysaccharide (LPS) that activates the non-canonical CASP4/CASP11 inflammasome or double-stranded DNA (dsDNA) that activates the AIM2 inflammasome. As an activator of NLRP3 inflammasome assembly: promotes selective NLRP3 inflammasome assembly in response to microbial and soluble, but not crystalline, agents. Independently of its GTPase activity, acts as an inhibitor of various viruses infectivity by inhibiting FURIN-mediated maturation of viral envelope proteins. The polypeptide is Guanylate-binding protein 5 (Mus musculus (Mouse)).